Here is a 185-residue protein sequence, read N- to C-terminus: Ribosome-recycling factor (185 aa).

It belongs to the RRF family.

It is found in the cytoplasm. In terms of biological role, responsible for the release of ribosomes from messenger RNA at the termination of protein biosynthesis. May increase the efficiency of translation by recycling ribosomes from one round of translation to another. In Sodalis glossinidius (strain morsitans), this protein is Ribosome-recycling factor.